We begin with the raw amino-acid sequence, 348 residues long: UDP-3-O-acylglucosamine N-acyltransferase (348 aa).

His-257 acts as the Proton acceptor in catalysis.

The protein belongs to the transferase hexapeptide repeat family. LpxD subfamily. Homotrimer.

The catalysed reaction is a UDP-3-O-[(3R)-3-hydroxyacyl]-alpha-D-glucosamine + a (3R)-hydroxyacyl-[ACP] = a UDP-2-N,3-O-bis[(3R)-3-hydroxyacyl]-alpha-D-glucosamine + holo-[ACP] + H(+). It participates in bacterial outer membrane biogenesis; LPS lipid A biosynthesis. Functionally, catalyzes the N-acylation of UDP-3-O-acylglucosamine using 3-hydroxyacyl-ACP as the acyl donor. Is involved in the biosynthesis of lipid A, a phosphorylated glycolipid that anchors the lipopolysaccharide to the outer membrane of the cell. This chain is UDP-3-O-acylglucosamine N-acyltransferase, found in Bartonella henselae (strain ATCC 49882 / DSM 28221 / CCUG 30454 / Houston 1) (Rochalimaea henselae).